The primary structure comprises 648 residues: Threonine--tRNA ligase (648 aa).

The region spanning Met1–Thr61 is the TGS domain. The catalytic stretch occupies residues Asp243 to Pro549. The Zn(2+) site is built by Cys349, His400, and His526.

It belongs to the class-II aminoacyl-tRNA synthetase family. Homodimer. The cofactor is Zn(2+).

The protein localises to the cytoplasm. It carries out the reaction tRNA(Thr) + L-threonine + ATP = L-threonyl-tRNA(Thr) + AMP + diphosphate + H(+). In terms of biological role, catalyzes the attachment of threonine to tRNA(Thr) in a two-step reaction: L-threonine is first activated by ATP to form Thr-AMP and then transferred to the acceptor end of tRNA(Thr). Also edits incorrectly charged L-seryl-tRNA(Thr). The protein is Threonine--tRNA ligase of Orientia tsutsugamushi (strain Boryong) (Rickettsia tsutsugamushi).